The primary structure comprises 264 residues: Alkaline ceramidase 1 (264 aa).

Residues 1-27 (MPSIFAYQSSEVDWCESNFQYSELVAE) lie on the Lumenal side of the membrane. Ca(2+) is bound by residues D13, W14, E16, N18, and E27. A helical membrane pass occupies residues 28–48 (FYNTFSNIPFFIFGPLMMLLM). Over 49 to 57 (HPYAQKRSR) the chain is Cytoplasmic. A helical transmembrane segment spans residues 58-78 (YIYVVWVLFMIIGLFSMYFHM). H77 contacts Zn(2+). Residues 79 to 81 (TLS) are Lumenal-facing. Residues 82–102 (FLGQLLDEIAILWLLGSGYSI) traverse the membrane as a helical segment. Residues 103–119 (WMPRCYFPSFLGGNRSQ) are Cytoplasmic-facing. The helical transmembrane segment at 120 to 137 (FIRLVFITTVVSTLLSFL) threads the bilayer. Position 138 (R138) is a topological domain, lumenal. A helical transmembrane segment spans residues 139 to 159 (PTVNAYALNSIALHILYIVCQ). At 160-176 (EYRKTSNKELRHLIEVS) the chain is on the cytoplasmic side. A helical membrane pass occupies residues 177–197 (VVLWAVALTSWISDRLLCSFW). Residues 198–206 (QRIHFFYLH) are Lumenal-facing. Positions 206 and 210 each coordinate Zn(2+). A helical membrane pass occupies residues 207–227 (SIWHVLISITFPYGMVTMALV). Topologically, residues 228–264 (DANYEMPGETLKVRYWPRDSWPVGLPYVEIRGDDKDC) are cytoplasmic.

It belongs to the alkaline ceramidase family. Zn(2+) is required as a cofactor. In terms of tissue distribution, mainly expressed in epidermis.

The protein resides in the endoplasmic reticulum membrane. The catalysed reaction is an N-acylsphing-4-enine + H2O = sphing-4-enine + a fatty acid. It catalyses the reaction N-tetracosanoyl-sphing-4-enine + H2O = tetracosanoate + sphing-4-enine. It carries out the reaction an N-acylsphinganine + H2O = sphinganine + a fatty acid. The enzyme catalyses N-(9Z-octadecenoyl)-sphing-4-enine + H2O = sphing-4-enine + (9Z)-octadecenoate. The catalysed reaction is N-(15Z-tetracosenoyl)-sphing-4-enine + H2O = (15Z)-tetracosenoate + sphing-4-enine. The protein operates within lipid metabolism; sphingolipid metabolism. Its activity is regulated as follows. Inhibited by sphingosine. Activity is Ca(2+)-dependent. Functionally, endoplasmic reticulum ceramidase that catalyzes the hydrolysis of ceramides into sphingosine and free fatty acids at alkaline pH. Ceramides, sphingosine, and its phosphorylated form sphingosine-1-phosphate are bioactive lipids that mediate cellular signaling pathways regulating several biological processes including cell proliferation, apoptosis and differentiation. Exhibits a strong substrate specificity towards the natural stereoisomer of ceramides with D-erythro-sphingosine as a backbone and has a higher activity towards very long-chain unsaturated fatty acids like the C24:1-ceramide. May also hydrolyze dihydroceramides to produce dihydrosphingosine. ACER1 is a skin-specific ceramidase that regulates the levels of ceramides, sphingosine and sphingosine-1-phosphate in the epidermis, mediates the calcium-induced differentiation of epidermal keratinocytes and more generally plays an important role in skin homeostasis. The chain is Alkaline ceramidase 1 from Homo sapiens (Human).